Reading from the N-terminus, the 191-residue chain is Protein GrpE (191 aa).

The protein belongs to the GrpE family. In terms of assembly, homodimer.

The protein resides in the cytoplasm. In terms of biological role, participates actively in the response to hyperosmotic and heat shock by preventing the aggregation of stress-denatured proteins, in association with DnaK and GrpE. It is the nucleotide exchange factor for DnaK and may function as a thermosensor. Unfolded proteins bind initially to DnaJ; upon interaction with the DnaJ-bound protein, DnaK hydrolyzes its bound ATP, resulting in the formation of a stable complex. GrpE releases ADP from DnaK; ATP binding to DnaK triggers the release of the substrate protein, thus completing the reaction cycle. Several rounds of ATP-dependent interactions between DnaJ, DnaK and GrpE are required for fully efficient folding. In Listeria monocytogenes serotype 1/2a (strain 10403S), this protein is Protein GrpE.